The sequence spans 176 residues: Ribosome maturation factor RimM (176 aa).

The region spanning 93–166 (EGEYYHADLI…RVVIEMPGEI (74 aa)) is the PRC barrel domain.

This sequence belongs to the RimM family. In terms of assembly, binds ribosomal protein uS19.

The protein localises to the cytoplasm. Functionally, an accessory protein needed during the final step in the assembly of 30S ribosomal subunit, possibly for assembly of the head region. Essential for efficient processing of 16S rRNA. May be needed both before and after RbfA during the maturation of 16S rRNA. It has affinity for free ribosomal 30S subunits but not for 70S ribosomes. The polypeptide is Ribosome maturation factor RimM (Rhodopseudomonas palustris (strain BisA53)).